Here is a 564-residue protein sequence, read N- to C-terminus: E3 ubiquitin-protein ligase TRIM16 (564 aa).

The segment at M1–G70 is disordered. Over residues S24–P39 the composition is skewed to low complexity. 2 consecutive B box-type zinc fingers follow at residues G72–P122 and H126–L165. S116 carries the phosphoserine modification. C131, H134, C153, and H157 together coordinate Zn(2+). Coiled-coil stretches lie at residues L165 to S203, A243 to A274, and H320 to E340. S203 is modified (phosphoserine). The region spanning Y355 to E553 is the B30.2/SPRY domain.

This sequence belongs to the TRIM/RBCC family. Homodimerizes via its coiled-coil domain. Heterodimerizes with MID1, TRIM24 and PML. Interacts with Galectin-3/LGALS3 in a ULK1-dependent manner; this interaction mediates autophagy of damage endomembranes. Interacts with BECN1. Interacts with ATG16L1. Interacts with p62/SQSTM and LC3B/MAP1LC3B. Phosphorylated by ULK1. Post-translationally, auto-ubiquitinates via its B-Boxes.

It is found in the cytoplasm. The catalysed reaction is S-ubiquitinyl-[E2 ubiquitin-conjugating enzyme]-L-cysteine + [acceptor protein]-L-lysine = [E2 ubiquitin-conjugating enzyme]-L-cysteine + N(6)-ubiquitinyl-[acceptor protein]-L-lysine.. E3 ubiquitin ligase that plays an essential role in the organization of autophagic response and ubiquitination upon lysosomal and phagosomal damages. Plays a role in the stress-induced biogenesis and degradation of protein aggresomes by regulating the p62-KEAP1-NRF2 signaling and particularly by modulating the ubiquitination levels and thus stability of NRF2. Acts as a scaffold protein and facilitates autophagic degradation of protein aggregates by interacting with p62/SQSTM, ATG16L1 and LC3B/MAP1LC3B. In turn, protects the cell against oxidative stress-induced cell death as a consequence of endomembrane damage. The polypeptide is E3 ubiquitin-protein ligase TRIM16 (TRIM16) (Pongo abelii (Sumatran orangutan)).